We begin with the raw amino-acid sequence, 162 residues long: MENTEVKVGIADLNLVSSPGKIMTIGLGSCIGIALYDRRSKLAGLSHIMLPDSTQFKNVTNPMKFADLAIPLLIKKMEAKGCLKRNLIAKIAGGASMFSFSDKSMVGDIGKRNIQAVKKSLSEERIQIIAEDVGGNKGRTMILDALDGKVTLKIVGIGIVEL.

The protein belongs to the CheD family.

It catalyses the reaction L-glutaminyl-[protein] + H2O = L-glutamyl-[protein] + NH4(+). Its function is as follows. Probably deamidates glutamine residues to glutamate on methyl-accepting chemotaxis receptors (MCPs), playing an important role in chemotaxis. In Clostridium botulinum (strain Alaska E43 / Type E3), this protein is Probable chemoreceptor glutamine deamidase CheD.